The sequence spans 242 residues: Mediator of RNA polymerase II transcription subunit 19-A (242 aa).

A compositionally biased stretch (polar residues) spans 1–15 (MTEIFSTLFGQNDAQ). Disordered stretches follow at residues 1–33 (MTEI…PPPS) and 171–242 (PPKK…NSLR). Over residues 171-184 (PPKKKSKHKHRHHH) the composition is skewed to basic residues. The segment covering 193-210 (TRTDPTKKKKKKDNEPER) has biased composition (basic and acidic residues). Residues 211–223 (RKKKKDKKKKKNR) show a composition bias toward basic residues. A compositionally biased stretch (polar residues) spans 232-242 (TGSQPNSNSLR).

Belongs to the Mediator complex subunit 19 family. As to quaternary structure, component of the Mediator complex.

Its subcellular location is the nucleus. Its function is as follows. Component of the Mediator complex, a coactivator involved in the regulated transcription of nearly all RNA polymerase II-dependent genes. Mediator functions as a bridge to convey information from gene-specific regulatory proteins to the basal RNA polymerase II transcription machinery. Mediator is recruited to promoters by direct interactions with regulatory proteins and serves as a scaffold for the assembly of a functional preinitiation complex with RNA polymerase II and the general transcription factors. The sequence is that of Mediator of RNA polymerase II transcription subunit 19-A (med19a) from Danio rerio (Zebrafish).